A 679-amino-acid polypeptide reads, in one-letter code: Altered inheritance of mitochondria protein 21 (679 aa).

A disordered region spans residues Met1–Thr85. A compositionally biased stretch (basic and acidic residues) spans Val9–Ser19. Phosphothreonine is present on Thr18. Ser36 bears the Phosphoserine mark. A Phosphothreonine modification is found at Thr58. Phosphoserine is present on Ser70. Thr85 bears the Phosphothreonine mark. Phosphoserine is present on Ser104. The span at Asn110–Ser119 shows a compositional bias: basic residues. 3 disordered regions span residues Asn110–Glu522, Ile549–Met580, and Glu593–Leu679. 2 stretches are compositionally biased toward polar residues: residues Gln133–Ser149 and Ser164–Glu178. Residues Val179–Ile213 show a composition bias toward basic and acidic residues. Phosphoserine occurs at positions 183, 206, and 231. Basic and acidic residues predominate over residues Ser243 to Ile272. Phosphothreonine is present on Thr277. Ser284 bears the Phosphoserine mark. Polar residues predominate over residues Glu296–Ala323. Ser324 is subject to Phosphoserine. Composition is skewed to basic and acidic residues over residues Lys339 to Glu361 and Glu372 to Arg383. Positions Arg383 to Pro396 are interaction with SH3 domain of ABP1. 2 stretches are compositionally biased toward polar residues: residues Asp414 to Ser427 and Ser437 to Leu452. Residues Leu471–Ser482 are compositionally biased toward basic and acidic residues. A compositionally biased stretch (basic residues) spans Arg501–Pro512. At Thr552 the chain carries Phosphothreonine. Over residues Gln556 to Ser576 the composition is skewed to basic and acidic residues. Ser576 is subject to Phosphoserine. Residues Pro603–Val613 are compositionally biased toward polar residues. Ser620, Ser623, Ser625, Ser627, Ser667, Ser671, Ser675, and Ser678 each carry phosphoserine. The span at Ser667 to Leu679 shows a compositional bias: basic and acidic residues.

Belongs to the AIM21 family. As to quaternary structure, interacts with ribosomes. Interacts with ABP1.

It is found in the cytoplasm. Its subcellular location is the cytoskeleton. It localises to the actin patch. Involved in mitochondrial migration along actin filaments. The sequence is that of Altered inheritance of mitochondria protein 21 (AIM21) from Saccharomyces cerevisiae (strain ATCC 204508 / S288c) (Baker's yeast).